The primary structure comprises 532 residues: MAKFIFVTGGVVSGLGKGITASSIGALLKASGLKVFMQKFDPYLNVDPGTMSPYQHGEVFVTKDGGETDLDLGHYERFIDEELTKLSSTTSGKIYLSVIKGERKGDTSGKTIQVVPHITDAIKNKVYQAAKQSQADVIISEIGGTVGDIESQPFIEAIRQIRLEQGKENVMFVHVVLLLWLAASKEYKTKPIQNSVKAMASLGIQPDVIVCRSDSSSPKDIKEKISLFCNVPITNIIDAIDQDSIYRVPLALAKQNLQDIIIEQLQLKANAIDLTSWKQFNKKIDSSSQEIEISFVGKYIELQDAYLSVLESLKIAGWEFNKKIKIRWIQAETLNESNYNEILKNSQGILVPGGFGKRGIEGMMLASRYARDNDIPYLGICLGMQIATISIARDLLNWTDADSTEFNKNTTHPIFDYIKGIDRDNIGGTLRLGTMVTKLEKDSLVSKLYNSDVALERHRHRYEFNNKYKKDLESVGLRFSGIYEEKNLVEVIEMPSLKFFVASQFHPEFTSRPNKPTPLFKGFIKAIIENNK.

Residues 1–267 are amidoligase domain; that stretch reads MAKFIFVTGG…QDIIIEQLQL (267 aa). Ser13 is a binding site for CTP. A UTP-binding site is contributed by Ser13. 14 to 19 contacts ATP; the sequence is GLGKGI. Tyr54 contacts L-glutamine. Residue Asp71 coordinates ATP. 2 residues coordinate Mg(2+): Asp71 and Glu141. CTP-binding positions include 148–150, 188–193, and Lys224; these read DIE and KTKPIQ. Residues 188–193 and Lys224 contribute to the UTP site; that span reads KTKPIQ. The region spanning 292–532 is the Glutamine amidotransferase type-1 domain; the sequence is EISFVGKYIE…FIKAIIENNK (241 aa). Gly354 is an L-glutamine binding site. The Nucleophile; for glutamine hydrolysis role is filled by Cys381. Residues 382–385, Glu405, and Arg461 contribute to the L-glutamine site; that span reads LGMQ. Catalysis depends on residues His506 and Glu508.

The protein belongs to the CTP synthase family. As to quaternary structure, homotetramer.

It catalyses the reaction UTP + L-glutamine + ATP + H2O = CTP + L-glutamate + ADP + phosphate + 2 H(+). The catalysed reaction is L-glutamine + H2O = L-glutamate + NH4(+). The enzyme catalyses UTP + NH4(+) + ATP = CTP + ADP + phosphate + 2 H(+). Its pathway is pyrimidine metabolism; CTP biosynthesis via de novo pathway; CTP from UDP: step 2/2. Its activity is regulated as follows. Allosterically activated by GTP, when glutamine is the substrate; GTP has no effect on the reaction when ammonia is the substrate. The allosteric effector GTP functions by stabilizing the protein conformation that binds the tetrahedral intermediate(s) formed during glutamine hydrolysis. Inhibited by the product CTP, via allosteric rather than competitive inhibition. Catalyzes the ATP-dependent amination of UTP to CTP with either L-glutamine or ammonia as the source of nitrogen. Regulates intracellular CTP levels through interactions with the four ribonucleotide triphosphates. This Mycoplasma capricolum subsp. capricolum (strain California kid / ATCC 27343 / NCTC 10154) protein is CTP synthase.